A 373-amino-acid polypeptide reads, in one-letter code: Flagellar P-ring protein (373 aa).

Residues 1–27 (MPSFSPTLLKLAAAALSALLLSGVAAS) form the signal peptide.

The protein belongs to the FlgI family. The basal body constitutes a major portion of the flagellar organelle and consists of four rings (L,P,S, and M) mounted on a central rod.

The protein localises to the periplasm. It localises to the bacterial flagellum basal body. Its function is as follows. Assembles around the rod to form the L-ring and probably protects the motor/basal body from shearing forces during rotation. The protein is Flagellar P-ring protein of Rhodopseudomonas palustris (strain BisB5).